A 158-amino-acid polypeptide reads, in one-letter code: MTHFISIATYIYALVSAGFIGGWHDEESWIKDTEYEHGGYHMIIDTPAVVNYSLEYGNYQWIFQKYMKEGKVTVERFYRNSLDIPKEILTDEALAFIKDWDENANEYELHAGEGVLYFKYEGEEKGYVIPMAYAGEIMFVPDEDAEKALEIINSQKKY.

In Bacillus subtilis (Bacteriophage SP01), this protein is Putative gene 52 protein (52).